The chain runs to 480 residues: Lysostaphin (480 aa).

The N-terminal stretch at 1 to 23 is a signal peptide; it reads MKKTKNNYYTTPLAIGLSTFALA. Residues 24-234 constitute a propeptide that is removed on maturation; the sequence is SIVYGGIQNE…ALVQNRTALR (211 aa). Tandem repeats lie at residues 49 to 61, 62 to 74, 75 to 87, 88 to 100, 101 to 113, 114 to 126, 127 to 139, 140 to 152, 153 to 165, 166 to 178, 179 to 191, 192 to 204, and 205 to 217. The segment at 49-230 is 14 X 13 AA tandem repeats of A-E-V-E-T-S-K-[AP]-P-V-E-N-T; that stretch reads AEVETSKPPV…ETSKALVQNR (182 aa). A disordered region spans residues 51 to 219; the sequence is VETSKPPVEN…SKAPVENTAE (169 aa). Residues 218-230 form a 14; approximate repeat; it reads AEVETSKALVQNR. Zn(2+) contacts are provided by histidine 266 and aspartate 270. Residue histidine 347 is part of the active site. Residue histidine 349 participates in Zn(2+) binding. Positions 400 to 468 constitute an SH3b domain; the sequence is SESASFTPNT…YLPVRTWNKS (69 aa).

It belongs to the peptidase M23B family. In terms of assembly, monomer. Requires Zn(2+) as cofactor.

It localises to the secreted. It catalyses the reaction Hydrolysis of the -Gly-|-Gly- bond in the pentaglycine inter-peptide link joining staphylococcal cell wall peptidoglycans.. Its function is as follows. Lyses staphylococcal cells by hydrolyzing the polyglycine interpeptide bridges of the peptidoglycan. In Staphylococcus staphylolyticus, this protein is Lysostaphin (lss).